The chain runs to 691 residues: Homeobox protein NOBOX (691 aa).

Basic and acidic residues predominate over residues 94 to 103 (ELTRGQKAGE). Positions 94 to 233 (ELTRGQKAGE…NSARATHNPV (140 aa)) are disordered. The span at 216 to 228 (PTSSPGAPNSARA) shows a compositional bias: polar residues. Positions 272-363 (RKKTRTLYRS…NRRAKWRKME (92 aa)) form a DNA-binding region, homeobox. 3 disordered regions span residues 366–385 (NGKE…SQCS), 394–437 (VPME…AQRV), and 635–691 (QALG…SHVP). Residues 395 to 405 (PMEPKPDPFPQ) show a composition bias toward pro residues. The span at 420-432 (TSDQTLAPTQPSE) shows a compositional bias: polar residues. Basic and acidic residues predominate over residues 679 to 691 (EEARGDDKNSHVP).

In terms of tissue distribution, expressed in ovaries, testes and pancreas. Expressed within all stages of the adult female germline, from primordial follicles through to MII oocytes.

It is found in the nucleus. Functionally, transcription factor which may play a role in oogenesis. Binds preferentially to the DNA sequences 5'-TAATTG-3', 5'-TAGTTG-3' and 5'-TAATTA-3'. This is Homeobox protein NOBOX (NOBOX) from Homo sapiens (Human).